The sequence spans 474 residues: 3-isopropylmalate dehydratase large subunit (474 aa).

Residues Cys-352, Cys-413, and Cys-416 each coordinate [4Fe-4S] cluster.

This sequence belongs to the aconitase/IPM isomerase family. LeuC type 1 subfamily. As to quaternary structure, heterodimer of LeuC and LeuD. Requires [4Fe-4S] cluster as cofactor.

The enzyme catalyses (2R,3S)-3-isopropylmalate = (2S)-2-isopropylmalate. Its pathway is amino-acid biosynthesis; L-leucine biosynthesis; L-leucine from 3-methyl-2-oxobutanoate: step 2/4. In terms of biological role, catalyzes the isomerization between 2-isopropylmalate and 3-isopropylmalate, via the formation of 2-isopropylmaleate. The sequence is that of 3-isopropylmalate dehydratase large subunit from Pseudomonas savastanoi pv. phaseolicola (strain 1448A / Race 6) (Pseudomonas syringae pv. phaseolicola (strain 1448A / Race 6)).